Reading from the N-terminus, the 63-residue chain is Metallothionein-1 (63 aa).

2 repeats span residues 23 to 30 and 56 to 63; these read CGDKCECK.

The protein belongs to the metallothionein superfamily. Type 9 family.

Its function is as follows. The metallothioneins are involved in the cellular sequestration of toxic metal ions. The sequence is that of Metallothionein-1 (MT-I) from Candida glabrata (strain ATCC 2001 / BCRC 20586 / JCM 3761 / NBRC 0622 / NRRL Y-65 / CBS 138) (Yeast).